Consider the following 91-residue polypeptide: MIENILIIDNYDSFTYNLYQYVGEISPNIEVYRNDKITLEKIEEMNPTHIIISPGPGFPKDAGICIEAIRKFGRYIPILGVCLGHQAIGEA.

Residues 4–91 (NILIIDNYDS…CLGHQAIGEA (88 aa)) enclose the Glutamine amidotransferase type-1 domain. Position 55–57 (55–57 (GPG)) interacts with L-glutamine. Cys82 acts as the Nucleophile; for GATase activity in catalysis. Gln86 contributes to the L-glutamine binding site.

Heterotetramer consisting of two non-identical subunits: a beta subunit (TrpG) and a large alpha subunit (TrpE).

The catalysed reaction is chorismate + L-glutamine = anthranilate + pyruvate + L-glutamate + H(+). It participates in amino-acid biosynthesis; L-tryptophan biosynthesis; L-tryptophan from chorismate: step 1/5. Its function is as follows. Part of a heterotetrameric complex that catalyzes the two-step biosynthesis of anthranilate, an intermediate in the biosynthesis of L-tryptophan. In the first step, the glutamine-binding beta subunit (TrpG) of anthranilate synthase (AS) provides the glutamine amidotransferase activity which generates ammonia as a substrate that, along with chorismate, is used in the second step, catalyzed by the large alpha subunit of AS (TrpE) to produce anthranilate. In the absence of TrpG, TrpE can synthesize anthranilate directly from chorismate and high concentrations of ammonia. This is Anthranilate synthase component 2 (trpG) from Acetivibrio thermocellus (Hungateiclostridium thermocellum).